Reading from the N-terminus, the 600-residue chain is Epidermal growth factor receptor kinase substrate 8-like protein 3 (600 aa).

Positions glutamine 28 to proline 155 constitute a PTB domain. 2 disordered regions span residues glutamate 152–aspartate 245 and leucine 429–serine 452. Over residues serine 204 to serine 214 the composition is skewed to low complexity. Position 238 is a phosphoserine (serine 238). In terms of domain architecture, SH3 spans arginine 457 to alanine 516.

Belongs to the EPS8 family. Interacts with ABI1. Part of a complex that contains SOS1, ABI1 and EPS8L2. Interacts with FASLG. In terms of tissue distribution, detected in embryonic gut. Detected in adult testis, placenta, adrenal gland and intestine.

The protein resides in the cytoplasm. The polypeptide is Epidermal growth factor receptor kinase substrate 8-like protein 3 (Eps8l3) (Mus musculus (Mouse)).